A 467-amino-acid chain; its full sequence is Cis-zeatin O-glucosyltransferase 1 (467 aa).

His-21 serves as the catalytic Proton acceptor. An anthocyanidin-binding residues include His-21 and Asn-91. The active-site Charge relay is Asp-127. 9 residues coordinate UDP-alpha-D-glucose: Ala-343, Gln-345, His-360, Trp-363, Asn-364, Ser-365, Glu-368, Asp-384, and Gln-385.

Belongs to the UDP-glycosyltransferase family. In terms of tissue distribution, highly expressed in root. Expressed at lower level in kernel and cob. Weakly expressed in leaves. Weakly or not expressed in stems.

The catalysed reaction is cis-zeatin + UDP-alpha-D-glucose = O-beta-D-glucosyl-cis-zeatin + UDP + H(+). Its function is as follows. Utilizes UDP-glucose as the sugar donor and catalyzes the formation of O-beta-D-glucosyl-cis-zeatin from cis-zeatin. May regulate active versus storage forms of cytokinins and could have an impact on seed growth. The chain is Cis-zeatin O-glucosyltransferase 1 (CISZOG1) from Zea mays (Maize).